Reading from the N-terminus, the 156-residue chain is MTQSLHYSSPRETLTDTIMMAKIRKNLTFEAINQGTGLSLAFVTAALLGQHPLPEQAARVVAEKLDLDEDAIRLLQTIPLRGSIPGGVPTDPTIYRFYEMVQIYGSTLKALVHEQFGDGIISAINFKLDIKKVPDPDGGERAVITLDGKYLPTKPF.

Active-site residues include Arg96, Glu99, and Ser122.

It belongs to the cyanase family.

The catalysed reaction is cyanate + hydrogencarbonate + 3 H(+) = NH4(+) + 2 CO2. Catalyzes the reaction of cyanate with bicarbonate to produce ammonia and carbon dioxide. The sequence is that of Cyanate hydratase from Serratia proteamaculans (strain 568).